The following is a 199-amino-acid chain: MARCKS-related protein (199 aa).

Positions methionine 1 to glutamate 199 are disordered. Glycine 2 carries the N-myristoyl glycine lipid modification. Threonine 14 is subject to Phosphothreonine. The span at glutamate 16–alanine 26 shows a compositional bias: low complexity. Phosphoserine occurs at positions 22, 36, and 48. The segment covering glycine 53–alanine 64 has biased composition (low complexity). Position 71 is a phosphoserine (serine 71). Over residues alanine 74–threonine 85 the composition is skewed to basic and acidic residues. Residue threonine 85 is modified to Phosphothreonine. Residues proline 86–phenylalanine 98 show a composition bias toward basic residues. The segment at lysine 87–lysine 110 is effector domain involved in lipid-binding and calmodulin-binding. Serine 93, serine 101, and serine 104 each carry phosphoserine; by PKC. Serine 119 carries the phosphoserine modification. Residue serine 120 is modified to Phosphoserine; by MAPK8. Phosphoserine is present on residues serine 132 and serine 135. Residue threonine 148 is modified to Phosphothreonine; by MAPK8. A phosphoserine mark is found at serine 151, serine 162, and serine 165. A compositionally biased stretch (low complexity) spans glycine 175–glutamate 199. Threonine 183 is subject to Phosphothreonine; by MAPK8.

It belongs to the MARCKS family. Binds to filamentous actin (F-actin), but not to monomeric G-actin, independently of its phosphorylation status. Interacts with calmodulin. Phosphorylated. Phosphorylation at Ser-120 and Thr-183 is non-redundantly catalyzed by MAPK8 in vivo. Phosphorylation at Thr-148 is preferentially catalyzed by MAPK8 in vivo, but this modification can also be catalyzed by other kinases in the absence of MAPK8. May be phosphorylated by protein kinase C, which disrupts the interaction with calmodulin.

The protein localises to the cytoplasm. It localises to the cytoskeleton. It is found in the cell membrane. In terms of biological role, controls cell movement by regulating actin cytoskeleton homeostasis and filopodium and lamellipodium formation. When unphosphorylated, induces cell migration. When phosphorylated by MAPK8, induces actin bundles formation and stabilization, thereby reducing actin plasticity, hence restricting cell movement, including neuronal migration. May be involved in coupling the protein kinase C and calmodulin signal transduction systems. In Rattus norvegicus (Rat), this protein is MARCKS-related protein (Marcksl1).